The following is a 560-amino-acid chain: Potassium-transporting ATPase potassium-binding subunit (560 aa).

12 consecutive transmembrane segments (helical) span residues 6–26 (FLLI…LGSL), 63–83 (LLAI…ILMC), 132–152 (GLAV…FALI), 175–195 (LWVL…QGAI), 250–270 (LTNV…CFAF), 282–302 (AILW…MWAE), 327–347 (FGIL…CGAV), 356–376 (ALGG…FGGV), 379–399 (GLYG…LMIG), 416–436 (MTAL…ALAM), 483–503 (LLLA…VMAI), and 524–544 (GALF…LTFI).

Belongs to the KdpA family. As to quaternary structure, the system is composed of three essential subunits: KdpA, KdpB and KdpC.

The protein resides in the cell inner membrane. Part of the high-affinity ATP-driven potassium transport (or Kdp) system, which catalyzes the hydrolysis of ATP coupled with the electrogenic transport of potassium into the cytoplasm. This subunit binds the periplasmic potassium ions and delivers the ions to the membrane domain of KdpB through an intramembrane tunnel. The polypeptide is Potassium-transporting ATPase potassium-binding subunit (Cronobacter sakazakii (strain ATCC BAA-894) (Enterobacter sakazakii)).